Reading from the N-terminus, the 177-residue chain is ATP-dependent protease subunit HslV (177 aa).

Residue Thr-2 is part of the active site. Na(+) is bound by residues Gly-157, Cys-160, and Thr-163.

It belongs to the peptidase T1B family. HslV subfamily. In terms of assembly, a double ring-shaped homohexamer of HslV is capped on each side by a ring-shaped HslU homohexamer. The assembly of the HslU/HslV complex is dependent on binding of ATP.

The protein resides in the cytoplasm. The catalysed reaction is ATP-dependent cleavage of peptide bonds with broad specificity.. Allosterically activated by HslU binding. Functionally, protease subunit of a proteasome-like degradation complex believed to be a general protein degrading machinery. This chain is ATP-dependent protease subunit HslV, found in Aeromonas hydrophila subsp. hydrophila (strain ATCC 7966 / DSM 30187 / BCRC 13018 / CCUG 14551 / JCM 1027 / KCTC 2358 / NCIMB 9240 / NCTC 8049).